The primary structure comprises 500 residues: L-arabinose isomerase (500 aa).

Residues Glu306, Glu333, His350, and His450 each contribute to the Mn(2+) site.

This sequence belongs to the arabinose isomerase family. In terms of assembly, homohexamer. Mn(2+) is required as a cofactor.

The catalysed reaction is beta-L-arabinopyranose = L-ribulose. It functions in the pathway carbohydrate degradation; L-arabinose degradation via L-ribulose; D-xylulose 5-phosphate from L-arabinose (bacterial route): step 1/3. Functionally, catalyzes the conversion of L-arabinose to L-ribulose. The protein is L-arabinose isomerase of Shigella flexneri serotype 5b (strain 8401).